The following is a 235-amino-acid chain: Phosphatidylserine decarboxylase proenzyme (235 aa).

Ser204 functions as the Schiff-base intermediate with substrate; via pyruvic acid in the catalytic mechanism. Ser204 bears the Pyruvic acid (Ser); by autocatalysis mark.

This sequence belongs to the phosphatidylserine decarboxylase family. PSD-A subfamily. As to quaternary structure, heterodimer of a large membrane-associated beta subunit and a small pyruvoyl-containing alpha subunit. The cofactor is pyruvate. Post-translationally, is synthesized initially as an inactive proenzyme. Formation of the active enzyme involves a self-maturation process in which the active site pyruvoyl group is generated from an internal serine residue via an autocatalytic post-translational modification. Two non-identical subunits are generated from the proenzyme in this reaction, and the pyruvate is formed at the N-terminus of the alpha chain, which is derived from the carboxyl end of the proenzyme. The post-translation cleavage follows an unusual pathway, termed non-hydrolytic serinolysis, in which the side chain hydroxyl group of the serine supplies its oxygen atom to form the C-terminus of the beta chain, while the remainder of the serine residue undergoes an oxidative deamination to produce ammonia and the pyruvoyl prosthetic group on the alpha chain.

Its subcellular location is the cell membrane. The enzyme catalyses a 1,2-diacyl-sn-glycero-3-phospho-L-serine + H(+) = a 1,2-diacyl-sn-glycero-3-phosphoethanolamine + CO2. The protein operates within phospholipid metabolism; phosphatidylethanolamine biosynthesis; phosphatidylethanolamine from CDP-diacylglycerol: step 2/2. Its function is as follows. Catalyzes the formation of phosphatidylethanolamine (PtdEtn) from phosphatidylserine (PtdSer). The protein is Phosphatidylserine decarboxylase proenzyme of Mycobacterium sp. (strain KMS).